Here is a 317-residue protein sequence, read N- to C-terminus: Acetyl-coenzyme A carboxylase carboxyl transferase subunit alpha (317 aa).

The region spanning 37–292 (EINKKLEQTK…ADYITKGYNE (256 aa)) is the CoA carboxyltransferase C-terminal domain.

It belongs to the AccA family. As to quaternary structure, acetyl-CoA carboxylase is a heterohexamer composed of biotin carboxyl carrier protein (AccB), biotin carboxylase (AccC) and two subunits each of ACCase subunit alpha (AccA) and ACCase subunit beta (AccD).

It is found in the cytoplasm. The catalysed reaction is N(6)-carboxybiotinyl-L-lysyl-[protein] + acetyl-CoA = N(6)-biotinyl-L-lysyl-[protein] + malonyl-CoA. The protein operates within lipid metabolism; malonyl-CoA biosynthesis; malonyl-CoA from acetyl-CoA: step 1/1. Functionally, component of the acetyl coenzyme A carboxylase (ACC) complex. First, biotin carboxylase catalyzes the carboxylation of biotin on its carrier protein (BCCP) and then the CO(2) group is transferred by the carboxyltransferase to acetyl-CoA to form malonyl-CoA. This is Acetyl-coenzyme A carboxylase carboxyl transferase subunit alpha from Flavobacterium johnsoniae (strain ATCC 17061 / DSM 2064 / JCM 8514 / BCRC 14874 / CCUG 350202 / NBRC 14942 / NCIMB 11054 / UW101) (Cytophaga johnsonae).